Consider the following 85-residue polypeptide: uncharacterized protein (85 aa).

It belongs to the ycf76 family.

The protein localises to the plastid. It localises to the chloroplast. This is an uncharacterized protein from Saccharum hybrid (Sugarcane).